Here is a 155-residue protein sequence, read N- to C-terminus: Transcriptional repressor NrdR (155 aa).

A zinc finger lies at 3–34 (CPFCGNIDTQVKDSRPAEDHVSIRRRRFCPAC). Positions 49–139 (LVVIKSSGKR…VYKNFQAADD (91 aa)) constitute an ATP-cone domain.

Belongs to the NrdR family. The cofactor is Zn(2+).

Its function is as follows. Negatively regulates transcription of bacterial ribonucleotide reductase nrd genes and operons by binding to NrdR-boxes. This Cereibacter sphaeroides (strain ATCC 17025 / ATH 2.4.3) (Rhodobacter sphaeroides) protein is Transcriptional repressor NrdR.